The following is a 481-amino-acid chain: Probable Xaa-Pro aminopeptidase PEPP (481 aa).

Mn(2+)-binding residues include Asp-265, Asp-276, Glu-399, and Glu-439.

This sequence belongs to the peptidase M24B family. Mn(2+) serves as cofactor.

It carries out the reaction Release of any N-terminal amino acid, including proline, that is linked to proline, even from a dipeptide or tripeptide.. In terms of biological role, catalyzes the removal of a penultimate prolyl residue from the N-termini of peptides. The polypeptide is Probable Xaa-Pro aminopeptidase PEPP (PEPP) (Uncinocarpus reesii (strain UAMH 1704)).